The following is a 70-amino-acid chain: Small ribosomal subunit protein bS21 (70 aa).

It belongs to the bacterial ribosomal protein bS21 family.

The sequence is that of Small ribosomal subunit protein bS21 from Methylibium petroleiphilum (strain ATCC BAA-1232 / LMG 22953 / PM1).